The following is a 147-amino-acid chain: Myoglobin (147 aa).

In terms of domain architecture, Globin spans 2 to 141 (ADFDMVLKCW…IIADMEADYK (140 aa)). His-60 serves as a coordination point for nitrite. An O2-binding site is contributed by His-60. His-89 serves as a coordination point for heme b.

Belongs to the globin family. Monomeric.

The protein localises to the cytoplasm. Its subcellular location is the sarcoplasm. It carries out the reaction Fe(III)-heme b-[protein] + nitric oxide + H2O = Fe(II)-heme b-[protein] + nitrite + 2 H(+). It catalyses the reaction H2O2 + AH2 = A + 2 H2O. Its function is as follows. Monomeric heme protein which primary function is to store oxygen and facilitate its diffusion within muscle tissues. Reversibly binds oxygen through a pentacoordinated heme iron and enables its timely and efficient release as needed during periods of heightened demand. Depending on the oxidative conditions of tissues and cells, and in addition to its ability to bind oxygen, it also has a nitrite reductase activity whereby it regulates the production of bioactive nitric oxide. Under stress conditions, like hypoxia and anoxia, it also protects cells against reactive oxygen species thanks to its pseudoperoxidase activity. This Notothenia neglecta (Yellowbelly rockcod) protein is Myoglobin (mb).